Here is a 174-residue protein sequence, read N- to C-terminus: Adenylosuccinate synthetase (174 aa).

GTP contacts are provided by residues 13-19 (GDEGKGK) and 41-43 (GHT). Aspartate 14 serves as the catalytic Proton acceptor. Positions 14 and 41 each coordinate Mg(2+). IMP-binding positions include 14–17 (DEGK), 39–42 (NAGH), threonine 130, and arginine 144. Histidine 42 (proton donor) is an active-site residue.

It belongs to the adenylosuccinate synthetase family. In terms of assembly, homodimer. Mg(2+) serves as cofactor.

Its subcellular location is the cytoplasm. It catalyses the reaction IMP + L-aspartate + GTP = N(6)-(1,2-dicarboxyethyl)-AMP + GDP + phosphate + 2 H(+). It participates in purine metabolism; AMP biosynthesis via de novo pathway; AMP from IMP: step 1/2. Its function is as follows. Plays an important role in the de novo pathway of purine nucleotide biosynthesis. Catalyzes the first committed step in the biosynthesis of AMP from IMP. The polypeptide is Adenylosuccinate synthetase (Stutzerimonas stutzeri (Pseudomonas stutzeri)).